The following is a 213-amino-acid chain: E3 ubiquitin-protein ligase NleG8 (213 aa).

The segment at 136-189 (CPITLCVPETGVFVKNARCSKVCSLYDISALTEMLRRNASHPLSREAFTPGMIV) is RING/U-box domain. The short motif at 211-213 (TRL) is the PDZ-binding motif element.

The protein belongs to the NleG E3 ligase family. As to quaternary structure, interacts with host GOPC (human protein).

Its subcellular location is the secreted. It localises to the host cytoplasm. The enzyme catalyses S-ubiquitinyl-[E2 ubiquitin-conjugating enzyme]-L-cysteine + [acceptor protein]-L-lysine = [E2 ubiquitin-conjugating enzyme]-L-cysteine + N(6)-ubiquitinyl-[acceptor protein]-L-lysine.. In terms of biological role, effector proteins function to alter host cell physiology and promote bacterial survival in host tissues. This protein is an E3 ubiquitin-protein ligase that probably interferes with the host's ubiquitination pathway and targets host proteins for proteasomal degradation. Mice infected with a strain of bacteria deleted for this gene had an increased survival rate. Can be ubiquitinylated, and ubiquitinate ubiquitin, giving rise to polyubiquitin chains (in vitro). This is E3 ubiquitin-protein ligase NleG8 from Citrobacter rodentium.